The chain runs to 129 residues: Small ribosomal subunit protein uS11 (129 aa).

Belongs to the universal ribosomal protein uS11 family. Part of the 30S ribosomal subunit. Interacts with proteins S7 and S18. Binds to IF-3.

Its function is as follows. Located on the platform of the 30S subunit, it bridges several disparate RNA helices of the 16S rRNA. Forms part of the Shine-Dalgarno cleft in the 70S ribosome. The sequence is that of Small ribosomal subunit protein uS11 from Maricaulis maris (strain MCS10) (Caulobacter maris).